A 252-amino-acid polypeptide reads, in one-letter code: Chitooligosaccharide deacetylase (252 aa).

Mg(2+) contacts are provided by histidine 61 and histidine 125.

Belongs to the YdjC deacetylase family. ChbG subfamily. Homodimer. Mg(2+) serves as cofactor.

Its subcellular location is the cytoplasm. The catalysed reaction is N,N'-diacetylchitobiose + H2O = N-acetyl-beta-D-glucosaminyl-(1-&gt;4)-D-glucosamine + acetate. The enzyme catalyses diacetylchitobiose-6'-phosphate + H2O = N'-monoacetylchitobiose-6'-phosphate + acetate. It functions in the pathway glycan degradation; chitin degradation. Involved in the degradation of chitin. ChbG is essential for growth on the acetylated chitooligosaccharides chitobiose and chitotriose but is dispensable for growth on cellobiose and chitosan dimer, the deacetylated form of chitobiose. Deacetylation of chitobiose-6-P and chitotriose-6-P is necessary for both the activation of the chb promoter by the regulatory protein ChbR and the hydrolysis of phosphorylated beta-glucosides by the phospho-beta-glucosidase ChbF. Catalyzes the removal of only one acetyl group from chitobiose-6-P to yield monoacetylchitobiose-6-P, the inducer of ChbR and the substrate of ChbF. The polypeptide is Chitooligosaccharide deacetylase (Salmonella newport (strain SL254)).